A 396-amino-acid chain; its full sequence is 1-deoxy-D-xylulose 5-phosphate reductoisomerase (396 aa).

Positions 10, 11, 12, 13, and 123 each coordinate NADPH. Position 124 (lysine 124) interacts with 1-deoxy-D-xylulose 5-phosphate. Residue glutamate 125 participates in NADPH binding. Mn(2+) is bound at residue aspartate 149. Serine 150, glutamate 151, serine 185, and histidine 208 together coordinate 1-deoxy-D-xylulose 5-phosphate. A Mn(2+)-binding site is contributed by glutamate 151. Residue glycine 214 coordinates NADPH. 1-deoxy-D-xylulose 5-phosphate is bound by residues serine 221, asparagine 226, lysine 227, and glutamate 230. Glutamate 230 lines the Mn(2+) pocket.

The protein belongs to the DXR family. The cofactor is Mg(2+). Requires Mn(2+) as cofactor.

The catalysed reaction is 2-C-methyl-D-erythritol 4-phosphate + NADP(+) = 1-deoxy-D-xylulose 5-phosphate + NADPH + H(+). It functions in the pathway isoprenoid biosynthesis; isopentenyl diphosphate biosynthesis via DXP pathway; isopentenyl diphosphate from 1-deoxy-D-xylulose 5-phosphate: step 1/6. Catalyzes the NADPH-dependent rearrangement and reduction of 1-deoxy-D-xylulose-5-phosphate (DXP) to 2-C-methyl-D-erythritol 4-phosphate (MEP). The chain is 1-deoxy-D-xylulose 5-phosphate reductoisomerase from Shewanella sp. (strain ANA-3).